A 406-amino-acid chain; its full sequence is COP9 signalosome complex subunit 4 (406 aa).

N-acetylalanine is present on A2. K25 is subject to N6-acetyllysine. A PCI domain is found at 197 to 366 (YRRKFIEAAQ…GIVHFETREA (170 aa)).

This sequence belongs to the CSN4 family. In terms of assembly, component of the CSN complex, composed of COPS1/GPS1, COPS2, COPS3, COPS4, COPS5, COPS6, COPS7 (COPS7A or COPS7B), COPS8 and COPS9 isoform 1. In the complex, it probably interacts directly with COPS1, COPS2, COPS3, COPS5, COPS6, COPS7 (COPS7A or COPS7B) and COPS8. Interacts with TOR1A; the interaction is direct and associates TOR1A and SNAPIN with the CSN complex. Interacts with STON2; controls STON2 neddylation levels. Interacts with ERCC6.

It localises to the cytoplasm. Its subcellular location is the nucleus. The protein localises to the cytoplasmic vesicle. The protein resides in the secretory vesicle. It is found in the synaptic vesicle. In terms of biological role, component of the COP9 signalosome complex (CSN), a complex involved in various cellular and developmental processes. The CSN complex is an essential regulator of the ubiquitin (Ubl) conjugation pathway by mediating the deneddylation of the cullin subunits of SCF-type E3 ligase complexes, leading to decrease the Ubl ligase activity of SCF-type complexes such as SCF, CSA or DDB2. Also involved in the deneddylation of non-cullin subunits such as STON2. The complex is also involved in phosphorylation of p53/TP53, c-jun/JUN, IkappaBalpha/NFKBIA, ITPK1, IRF8/ICSBP and SNAPIN, possibly via its association with CK2 and PKD kinases. CSN-dependent phosphorylation of TP53 and JUN promotes and protects degradation by the Ubl system, respectively. The sequence is that of COP9 signalosome complex subunit 4 (COPS4) from Homo sapiens (Human).